Reading from the N-terminus, the 274-residue chain is Thiazole synthase (274 aa).

The active-site Schiff-base intermediate with DXP is the Lys115. 1-deoxy-D-xylulose 5-phosphate contacts are provided by residues Gly176, 202–203, and 224–225; these read AG and NS.

The protein belongs to the ThiG family. Homotetramer. Forms heterodimers with either ThiH or ThiS.

It localises to the cytoplasm. The catalysed reaction is [ThiS sulfur-carrier protein]-C-terminal-Gly-aminoethanethioate + 2-iminoacetate + 1-deoxy-D-xylulose 5-phosphate = [ThiS sulfur-carrier protein]-C-terminal Gly-Gly + 2-[(2R,5Z)-2-carboxy-4-methylthiazol-5(2H)-ylidene]ethyl phosphate + 2 H2O + H(+). The protein operates within cofactor biosynthesis; thiamine diphosphate biosynthesis. Catalyzes the rearrangement of 1-deoxy-D-xylulose 5-phosphate (DXP) to produce the thiazole phosphate moiety of thiamine. Sulfur is provided by the thiocarboxylate moiety of the carrier protein ThiS. In vitro, sulfur can be provided by H(2)S. This Parasynechococcus marenigrum (strain WH8102) protein is Thiazole synthase.